We begin with the raw amino-acid sequence, 43 residues long: Potassium channel toxin gamma-KTx 4.7 (43 aa).

4 disulfide bridges follow: Cys5–Cys23, Cys11–Cys34, Cys20–Cys39, and Cys24–Cys41.

The protein belongs to the ergtoxin family. Gamma-KTx 4 subfamily. In terms of tissue distribution, expressed by the venom gland.

Its subcellular location is the secreted. Functionally, reversibly blocks Kv11/ERG potassium channels. The polypeptide is Potassium channel toxin gamma-KTx 4.7 (Centruroides limpidus (Mexican scorpion)).